The chain runs to 491 residues: Subtilase-type proteinase RRT12 (491 aa).

A signal peptide spans 1-17; it reads MKPQCILISLLVNLAYA. Residues Asn-38, Asn-64, Asn-106, and Asn-121 are each glycosylated (N-linked (GlcNAc...) asparagine). Residues 142–442 enclose the Peptidase S8 domain; sequence PFDVGDKDRY…FPRLNIEAIA (301 aa). Catalysis depends on charge relay system residues Asp-174 and His-205. N-linked (GlcNAc...) asparagine glycans are attached at residues Asn-268 and Asn-356. The active-site Charge relay system is Ser-365. Asn-449 is a glycosylation site (N-linked (GlcNAc...) asparagine).

This sequence belongs to the peptidase S8 family. Post-translationally, N-glycosylated.

It is found in the spore wall. Functionally, subtilisin-related protease involved in the formation of a protective dityrosine layer required for spore wall assembly. Identified in a screen for mutants with increased levels of rDNA transcription. This chain is Subtilase-type proteinase RRT12 (RRT12), found in Saccharomyces cerevisiae (strain ATCC 204508 / S288c) (Baker's yeast).